The sequence spans 444 residues: Ribosome biogenesis protein WDR12 homolog (444 aa).

A ubiquitin-like (UBL) domain region spans residues 7–87 (VLVKFVTKLP…ESTLEVEYVP (81 aa)). Positions 91–123 (PPQQKNSTPHDDWVSSVDGSRCAPASSSGGSPS) are disordered. WD repeat units lie at residues 105–148 (SSVD…VASV), 150–191 (AHAG…EEDA), and 203–242 (GHEDGVEAVAASPSGRRFASCGWDGKLLVWEGGEQLRWAA). Positions 243–264 (GTAEASKKKRKTGTANGSAAAG) are disordered. WD repeat units lie at residues 272–310 (GHLHCVSSVAWPAENSLFSGGWDHSVRRWDVSSGAAADT), 312–352 (NGSK…GSDA), 360–400 (AHGG…PLGM), and 403–444 (HHTD…YIVS).

It belongs to the WD repeat WDR12/YTM1 family.

Its subcellular location is the nucleus. It is found in the nucleolus. It localises to the nucleoplasm. Its function is as follows. Required for maturation of ribosomal RNAs and formation of the large ribosomal subunit. This is Ribosome biogenesis protein WDR12 homolog from Chlamydomonas reinhardtii (Chlamydomonas smithii).